Consider the following 350-residue polypeptide: Histidinol-phosphate aminotransferase (350 aa).

Lys-209 carries the N6-(pyridoxal phosphate)lysine modification.

Belongs to the class-II pyridoxal-phosphate-dependent aminotransferase family. Histidinol-phosphate aminotransferase subfamily. As to quaternary structure, homodimer. Pyridoxal 5'-phosphate is required as a cofactor.

It catalyses the reaction L-histidinol phosphate + 2-oxoglutarate = 3-(imidazol-4-yl)-2-oxopropyl phosphate + L-glutamate. It participates in amino-acid biosynthesis; L-histidine biosynthesis; L-histidine from 5-phospho-alpha-D-ribose 1-diphosphate: step 7/9. This Christiangramia forsetii (strain DSM 17595 / CGMCC 1.15422 / KT0803) (Gramella forsetii) protein is Histidinol-phosphate aminotransferase.